Consider the following 324-residue polypeptide: tRNA dimethylallyltransferase (324 aa).

17–24 (GPTASGKT) is a binding site for ATP. 19–24 (TASGKT) serves as a coordination point for substrate. 4 interaction with substrate tRNA regions span residues 42-45 (DSAL), 166-170 (QRIQR), 251-256 (RCVGYR), and 284-291 (KRQITWLR).

The protein belongs to the IPP transferase family. In terms of assembly, monomer. Requires Mg(2+) as cofactor.

The catalysed reaction is adenosine(37) in tRNA + dimethylallyl diphosphate = N(6)-dimethylallyladenosine(37) in tRNA + diphosphate. Its function is as follows. Catalyzes the transfer of a dimethylallyl group onto the adenine at position 37 in tRNAs that read codons beginning with uridine, leading to the formation of N6-(dimethylallyl)adenosine (i(6)A). This is tRNA dimethylallyltransferase from Burkholderia orbicola (strain MC0-3).